The chain runs to 212 residues: Adapter protein MecA 2 (212 aa).

The protein belongs to the MecA family. As to quaternary structure, homodimer.

Its function is as follows. Enables the recognition and targeting of unfolded and aggregated proteins to the ClpC protease or to other proteins involved in proteolysis. Acts negatively in the development of competence by binding ComK and recruiting it to the ClpCP protease. When overexpressed, inhibits sporulation. Also involved in Spx degradation by ClpC. This Halalkalibacterium halodurans (strain ATCC BAA-125 / DSM 18197 / FERM 7344 / JCM 9153 / C-125) (Bacillus halodurans) protein is Adapter protein MecA 2 (mecA2).